A 313-amino-acid polypeptide reads, in one-letter code: Pseudouridine-5'-phosphate glycosidase (313 aa).

The active-site Proton donor is the E26. 2 residues coordinate substrate: K87 and A107. Residue D139 coordinates Mn(2+). 141 to 143 (SAD) is a substrate binding site. The active-site Nucleophile is the K160.

This sequence belongs to the pseudouridine-5'-phosphate glycosidase family. As to quaternary structure, homotrimer. The cofactor is Mn(2+).

The enzyme catalyses D-ribose 5-phosphate + uracil = psi-UMP + H2O. Catalyzes the reversible cleavage of pseudouridine 5'-phosphate (PsiMP) to ribose 5-phosphate and uracil. Functions biologically in the cleavage direction, as part of a pseudouridine degradation pathway. This is Pseudouridine-5'-phosphate glycosidase from Corynebacterium aurimucosum (strain ATCC 700975 / DSM 44827 / CIP 107346 / CN-1) (Corynebacterium nigricans).